Here is a 201-residue protein sequence, read N- to C-terminus: FMN-dependent NADH:quinone oxidoreductase (201 aa).

FMN contacts are provided by residues serine 10, 16–18, 96–99, and 140–143; these read SQS, MYNF, and SRGG.

It belongs to the azoreductase type 1 family. As to quaternary structure, homodimer. Requires FMN as cofactor.

The enzyme catalyses 2 a quinone + NADH + H(+) = 2 a 1,4-benzosemiquinone + NAD(+). The catalysed reaction is N,N-dimethyl-1,4-phenylenediamine + anthranilate + 2 NAD(+) = 2-(4-dimethylaminophenyl)diazenylbenzoate + 2 NADH + 2 H(+). Quinone reductase that provides resistance to thiol-specific stress caused by electrophilic quinones. In terms of biological role, also exhibits azoreductase activity. Catalyzes the reductive cleavage of the azo bond in aromatic azo compounds to the corresponding amines. The polypeptide is FMN-dependent NADH:quinone oxidoreductase (Shigella boydii serotype 4 (strain Sb227)).